The sequence spans 191 residues: Vascular endothelial growth factor A (191 aa).

A signal peptide spans 1–26 (MNFLLTWIHWGLAALLYFHNAKVLQA). Intrachain disulfides connect Cys-52–Cys-94, Cys-83–Cys-128, and Cys-87–Cys-130. Residue Asn-101 is glycosylated (N-linked (GlcNAc...) asparagine).

Belongs to the PDGF/VEGF growth factor family. Homodimer; disulfide-linked. Also found as heterodimer with PGF. In terms of tissue distribution, expressed by the venom gland, and probably other tissues.

The protein resides in the secreted. In terms of biological role, growth factor active in angiogenesis, vasculogenesis and endothelial cell growth. Induces endothelial cell proliferation, promotes cell migration, inhibits apoptosis and induces permeabilization of blood vessels. Binds to heparan sulfate and heparin. The protein is Vascular endothelial growth factor A of Bitis gabonica (Gaboon adder).